We begin with the raw amino-acid sequence, 386 residues long: tRNA-specific 2-thiouridylase MnmA (386 aa).

Residues 9-16 (GMSGGVDS) and methionine 35 each bind ATP. The tract at residues 95 to 97 (NPD) is interaction with target base in tRNA. Cysteine 100 functions as the Nucleophile in the catalytic mechanism. An intrachain disulfide couples cysteine 100 to cysteine 196. Glycine 124 lines the ATP pocket. Residues 146-148 (KDQ) are interaction with tRNA. The Cysteine persulfide intermediate role is filled by cysteine 196. Residues 308-309 (RY) form an interaction with tRNA region.

Belongs to the MnmA/TRMU family.

It localises to the cytoplasm. The catalysed reaction is S-sulfanyl-L-cysteinyl-[protein] + uridine(34) in tRNA + AH2 + ATP = 2-thiouridine(34) in tRNA + L-cysteinyl-[protein] + A + AMP + diphosphate + H(+). Functionally, catalyzes the 2-thiolation of uridine at the wobble position (U34) of tRNA, leading to the formation of s(2)U34. This is tRNA-specific 2-thiouridylase MnmA from Burkholderia thailandensis (strain ATCC 700388 / DSM 13276 / CCUG 48851 / CIP 106301 / E264).